A 555-amino-acid polypeptide reads, in one-letter code: Neurofilament light polypeptide (555 aa).

The residue at position 2 (Ser2) is an N-acetylserine. Residues 2–93 (SSFSYEPYYS…KSIRTQEKAQ (92 aa)) form a head region. Arg23 carries the post-translational modification Asymmetric dimethylarginine; alternate. Omega-N-methylarginine; alternate is present on Arg23. At Arg30 the chain carries Omega-N-methylarginine. A Phosphotyrosine modification is found at Tyr43. Residues Ser56, Ser67, and Ser103 each carry the phosphoserine modification. Residues 90–401 (EKAQLQDLND…KLLEGEETRL (312 aa)) form the IF rod domain. The segment at 94 to 125 (LQDLNDRFASFIERVHELEQQNKVLEAELLVL) is coil 1A. The segment at 126 to 138 (RQKHSEPSRFRAL) is linker 1. Positions 139-234 (YEQEIRDLRL…KVHEEEIAEL (96 aa)) are coil 1B. Residues 235 to 253 (QAQIQYAQISVEMDVSSKP) form a linker 12 region. Positions 254 to 272 (DLSAALKDIRAQYEKLAAK) are coil 2A. The tract at residues 273 to 281 (NMQNAEEWF) is linker 2. Residues 282-397 (KSRFTVLTES…AAYRKLLEGE (116 aa)) form a coil 2B region. The interval 398-444 (ETRLSFTSVGSLTTGYTQSSQVFGRSAYGGLQTSSYLMSARSFPSYY) is tail, subdomain A. The segment at 398 to 555 (ETRLSFTSVG…GEEQATKKKD (158 aa)) is tail. Residues 445–555 (TSHVQEEQIE…GEEQATKKKD (111 aa)) are tail, subdomain B (acidic). The disordered stretch occupies residues 463 to 555 (KAEEAKDEPP…GEEQATKKKD (93 aa)). A compositionally biased stretch (acidic residues) spans 472 to 540 (PSEGEAEEEE…ETKEAEEEEK (69 aa)). Ser473 is subject to Phosphoserine. A Phosphothreonine modification is found at Thr532. The segment covering 541–555 (KDEGAGEEQATKKKD) has biased composition (basic and acidic residues).

This sequence belongs to the intermediate filament family. In terms of assembly, forms homodimers (in vitro). Forms heterodimers with NEFH or NEFM; which can further hetero-oligomerize (in vitro). Forms heterodimers with INA (in vitro). Interacts with ARHGEF28. Interacts with TRIM2. In terms of processing, O-glycosylated. Post-translationally, phosphorylated in the head and rod regions by the PKC kinase PKN1, leading to the inhibition of polymerization. Ubiquitinated in the presence of TRIM2 and UBE2D1.

It localises to the cell projection. The protein localises to the axon. The protein resides in the cytoplasm. It is found in the cytoskeleton. In terms of biological role, neurofilaments usually contain three intermediate filament proteins: NEFL, NEFM, and NEFH which are involved in the maintenance of neuronal caliber. May additionally cooperate with the neuronal intermediate filament proteins PRPH and INA to form neuronal filamentous networks. The polypeptide is Neurofilament light polypeptide (NEFL) (Bos taurus (Bovine)).